The chain runs to 79 residues: RNA-binding protein Hfq (79 aa).

In terms of domain architecture, Sm spans 10-70 (DVFLNTVRKQ…ISTIMPGQPV (61 aa)).

This sequence belongs to the Hfq family. Homohexamer.

Its function is as follows. RNA chaperone that binds small regulatory RNA (sRNAs) and mRNAs to facilitate mRNA translational regulation in response to envelope stress, environmental stress and changes in metabolite concentrations. Also binds with high specificity to tRNAs. This chain is RNA-binding protein Hfq, found in Bartonella henselae (strain ATCC 49882 / DSM 28221 / CCUG 30454 / Houston 1) (Rochalimaea henselae).